A 57-amino-acid chain; its full sequence is Large ribosomal subunit protein bL32c (57 aa).

The protein belongs to the bacterial ribosomal protein bL32 family.

It localises to the plastid. The protein localises to the chloroplast. The sequence is that of Large ribosomal subunit protein bL32c from Phalaenopsis aphrodite subsp. formosana (Moth orchid).